A 171-amino-acid chain; its full sequence is Orange carotenoid-binding domain-containing protein (171 aa).

Positions 21-171 (GDAVASTITV…ADMGVDPLAD (151 aa)) constitute an OCP N-terminal domain.

It belongs to the orange carotenoid-binding protein family. Requires 3'-hydroxyechinenone as cofactor.

The protein resides in the cellular thylakoid membrane. Its function is as follows. Might act as a photo-protectant, protecting against damage induced by excess light via a process known as non-photochemical quenching (NPQ). The chain is Orange carotenoid-binding domain-containing protein from Nostoc sp. (strain PCC 7120 / SAG 25.82 / UTEX 2576).